Here is a 135-residue protein sequence, read N- to C-terminus: Ribonuclease P protein component (135 aa).

Residues 115-135 (ETEPVSPVSPTSLPQNERGSP) form a disordered region. Residues 122–135 (VSPTSLPQNERGSP) show a composition bias toward polar residues.

It belongs to the RnpA family. In terms of assembly, consists of a catalytic RNA component (M1 or rnpB) and a protein subunit.

It catalyses the reaction Endonucleolytic cleavage of RNA, removing 5'-extranucleotides from tRNA precursor.. In terms of biological role, RNaseP catalyzes the removal of the 5'-leader sequence from pre-tRNA to produce the mature 5'-terminus. It can also cleave other RNA substrates such as 4.5S RNA. The protein component plays an auxiliary but essential role in vivo by binding to the 5'-leader sequence and broadening the substrate specificity of the ribozyme. The protein is Ribonuclease P protein component of Chloroflexus aggregans (strain MD-66 / DSM 9485).